Reading from the N-terminus, the 280-residue chain is Pre-mRNA-splicing factor PRP21 (280 aa).

One copy of the SURP motif 1 repeat lies at 11-49; sequence DIKTTVNYIKQHGVEFENKLLEDERFSFIKKDDPLHEYY. The segment at 53 to 72 is disordered; it reads MNEPTDTVSGEDNDRKSERE. The SURP motif 2 repeat unit spans residues 95–135; sequence VIKLTARYYAKDKSIVEQMISKDGEARLNFMNSSHPLHKTF. Composition is skewed to basic and acidic residues over residues 246–261 and 269–280; these read EKIV…GDSK and AVGETRLKKSKK. Positions 246–280 are disordered; that stretch reads EKIVSDQGKQKGGDSKGKKRKIRAVGETRLKKSKK.

Belongs to the CWC complex (or CEF1-associated complex), a spliceosome sub-complex reminiscent of a late-stage spliceosome composed of the U2, U5 and U6 snRNAs and at least BUD13, BUD31, BRR2, CDC40, CEF1, CLF1, CUS1, CWC2, CWC15, CWC21, CWC22, CWC23, CWC24, CWC25, CWC27, ECM2, HSH155, IST3, ISY1, LEA1, MSL1, NTC20, PRP8, PRP9, PRP11, PRP19, PRP21, PRP22, PRP45, PRP46, SLU7, SMB1, SMD1, SMD2, SMD3, SMX2, SMX3, SNT309, SNU114, SPP2, SYF1, SYF2, RSE1 and YJU2.

It is found in the nucleus. Functionally, mRNA splicing factors, PRP9, PRP11, and PRP21, are necessary for binding of the U2 snRNP to the pre-mRNA in an early step of spliceosome assembly. The sequence is that of Pre-mRNA-splicing factor PRP21 (PRP21) from Saccharomyces cerevisiae (strain ATCC 204508 / S288c) (Baker's yeast).